A 776-amino-acid polypeptide reads, in one-letter code: Protein translocase subunit SecA 2 (776 aa).

ATP is bound by residues Gln80, 98 to 102, and Asp486; that span reads GEGKT.

Belongs to the SecA family. Monomer and homodimer. Part of the essential Sec protein translocation apparatus which comprises SecA, SecYEG and auxiliary proteins SecDF. Other proteins may also be involved.

It is found in the cell membrane. Its subcellular location is the cytoplasm. The catalysed reaction is ATP + H2O + cellular proteinSide 1 = ADP + phosphate + cellular proteinSide 2.. Part of the Sec protein translocase complex. Interacts with the SecYEG preprotein conducting channel. Has a central role in coupling the hydrolysis of ATP to the transfer of proteins into and across the cell membrane, serving as an ATP-driven molecular motor driving the stepwise translocation of polypeptide chains across the membrane. This Listeria innocua serovar 6a (strain ATCC BAA-680 / CLIP 11262) protein is Protein translocase subunit SecA 2.